Reading from the N-terminus, the 415-residue chain is Phosphoglycerate kinase (415 aa).

Substrate is bound by residues 24-26 (DLN), Arg-43, 66-69 (HLGR), Arg-125, and Arg-165. Residues Lys-215, Gly-303, Glu-334, and 363–366 (GGDS) contribute to the ATP site.

This sequence belongs to the phosphoglycerate kinase family. As to quaternary structure, monomer.

The protein localises to the cytoplasm. It carries out the reaction (2R)-3-phosphoglycerate + ATP = (2R)-3-phospho-glyceroyl phosphate + ADP. It participates in carbohydrate degradation; glycolysis; pyruvate from D-glyceraldehyde 3-phosphate: step 2/5. This is Phosphoglycerate kinase from Mycobacterium avium (strain 104).